The following is a 223-amino-acid chain: Ribose-5-phosphate isomerase A (223 aa).

Substrate contacts are provided by residues 28–31, 81–84, and 94–97; these read TGTT, DSAD, and KGGG. The active-site Proton acceptor is glutamate 103. Lysine 121 is a binding site for substrate.

This sequence belongs to the ribose 5-phosphate isomerase family. Homodimer.

It catalyses the reaction aldehydo-D-ribose 5-phosphate = D-ribulose 5-phosphate. It functions in the pathway carbohydrate degradation; pentose phosphate pathway; D-ribose 5-phosphate from D-ribulose 5-phosphate (non-oxidative stage): step 1/1. Catalyzes the reversible conversion of ribose-5-phosphate to ribulose 5-phosphate. The protein is Ribose-5-phosphate isomerase A of Buchnera aphidicola subsp. Acyrthosiphon pisum (strain 5A).